The primary structure comprises 439 residues: MSKLYLMSLGCNKNLVDSEIMLGHLSAYELCDEPSKADVLIVNTCGFIDSAKKESINAILDLHEQRKKDSLLVVTGCLMQRYREELMKELPEVDLFTGVGDYERIDEMILKKTNLFSNSTYLQSENSKRIITGSNSHAFIKIAEGCNQKCSFCAIPSFKGKLKSREISSIIAELKDLVARGYKDFSFIAQDTSSYLFDKGEKDGLIRLIDEVEKIKGIRAARILYLYPTSASEALIKRIIASEIFINYFDMPLQHISDNMLKIMKRGANSTRLKEMLNLMKSAPNSFLRTGFIVGHPGESEADFEELCEFVKDFGFDRISVFAYSKEEDTAAFDMEQVPFKVINKRLKIIEKIVDEVIEKSFEKEVGQKRLVVCTGKSSEGEFFIAAKDLRWDREIDGEILINESECGNLEMGQIYECEILQNLDKKLLAKALRKVDAN.

The MTTase N-terminal domain occupies serine 2 to asparagine 114. 6 residues coordinate [4Fe-4S] cluster: cysteine 11, cysteine 45, cysteine 77, cysteine 146, cysteine 150, and cysteine 153. A Radical SAM core domain is found at threonine 132–glutamate 363.

It belongs to the methylthiotransferase family. RimO subfamily. [4Fe-4S] cluster is required as a cofactor.

Its subcellular location is the cytoplasm. The catalysed reaction is L-aspartate(89)-[ribosomal protein uS12]-hydrogen + (sulfur carrier)-SH + AH2 + 2 S-adenosyl-L-methionine = 3-methylsulfanyl-L-aspartate(89)-[ribosomal protein uS12]-hydrogen + (sulfur carrier)-H + 5'-deoxyadenosine + L-methionine + A + S-adenosyl-L-homocysteine + 2 H(+). Its function is as follows. Catalyzes the methylthiolation of an aspartic acid residue of ribosomal protein uS12. This chain is Ribosomal protein uS12 methylthiotransferase RimO, found in Campylobacter jejuni subsp. jejuni serotype O:2 (strain ATCC 700819 / NCTC 11168).